A 78-amino-acid chain; its full sequence is RNA-binding protein Hfq (78 aa).

The Sm domain maps to 10 to 69 (DPFLNTLRKEHVPVSIYLVNGIKLQGQIESFDQYVVLLRNTVTQMVYKHAISTVVPARAV).

This sequence belongs to the Hfq family. As to quaternary structure, homohexamer.

Its function is as follows. RNA chaperone that binds small regulatory RNA (sRNAs) and mRNAs to facilitate mRNA translational regulation in response to envelope stress, environmental stress and changes in metabolite concentrations. Also binds with high specificity to tRNAs. This chain is RNA-binding protein Hfq, found in Bordetella petrii (strain ATCC BAA-461 / DSM 12804 / CCUG 43448).